A 1051-amino-acid chain; its full sequence is SWI/SNF-related matrix-associated actin-dependent regulator of chromatin subfamily A member 5 (1051 aa).

Pro residues predominate over residues 1 to 15 (MSSAVEPPPPPPPES). The tract at residues 1 to 81 (MSSAVEPPPP…IQEPDPTYEE (81 aa)) is disordered. S2 is modified (N-acetylserine). Residues 24–38 (GAGGSSSGNKGGPEG) are compositionally biased toward gly residues. Low complexity predominate over residues 39–53 (GAAPAAPCAAGSGPA). T55 carries the phosphothreonine modification. At S65 the chain carries Phosphoserine. The segment covering 68–81 (KQKEIQEPDPTYEE) has biased composition (basic and acidic residues). Residue K82 forms a Glycyl lysine isopeptide (Lys-Gly) (interchain with G-Cter in SUMO2) linkage. Position 112 is a phosphothreonine (T112). S115, S136, and S170 each carry phosphoserine. In terms of domain architecture, Helicase ATP-binding spans 191 to 356 (ISLYENGING…WSLLNFLLPD (166 aa)). 204–211 (DEMGLGKT) serves as a coordination point for ATP. Positions 307-310 (DEAH) match the DEAH box motif. K439 is subject to N6-acetyllysine. Positions 486–637 (VLDKLLPKLK…SIVIQQGRLV (152 aa)) constitute a Helicase C-terminal domain. Residues K643, K646, K693, K721, and K734 each participate in a glycyl lysine isopeptide (Lys-Gly) (interchain with G-Cter in SUMO2) cross-link. Position 754 is a phosphoserine (S754). 2 consecutive SANT domains span residues 839 to 891 (QGFT…ERCN) and 942 to 1006 (KGKN…LITL). Residue K965 forms a Glycyl lysine isopeptide (Lys-Gly) (interchain with G-Cter in SUMO2) linkage. A disordered region spans residues 1014-1051 (LEEKEKAEKKKRGPKPSTQKRKMDGAPDGRGRKKKLKL). Over residues 1022–1033 (KKKRGPKPSTQK) the composition is skewed to basic residues. A compositionally biased stretch (basic and acidic residues) spans 1034 to 1043 (RKMDGAPDGR).

This sequence belongs to the SNF2/RAD54 helicase family. ISWI subfamily. Component of the ACF-5 ISWI chromatin-remodeling complex (also called the ACF/WCRF complex) at least composed of SMARCA5/SNF2H and BAZ1A/ACF1, which regulates the spacing of histone octamers on the DNA template to facilitate access to DNA. Within the complex interacts with BAZ1A/ACF1; the interaction is direct and is required to slide nucleosomes from end to center positions on a DNA template in an ATP-dependent manner. Component of the CHRAC ISWI chromatin-remodeling complex at least composed of SMARCA5/SNF2H, BAZ1A/ACF1, CHRAC1 and POLE3; the complex preferentially binds DNA through the CHRAC1-POLE3 heterodimer and possesses ATP-dependent nucleosome-remodeling activity. Within the complex interacts with BAZ1A/ACF1; the interaction is direct and promotes the interaction with the POLE3-CHRAC1 heterodimer. Within the complex interacts with the POLE3-CHRAC1 heterodimer; the interaction is direct and enhances nucleosome sliding activity by the SMARCA5/SNF2H and BAZ1A/ACF1 interaction. Neither POLE3 nor CHRAC1 enhances nucleosome sliding activity of the ACF-5 ISWI chromatin remodeling complex. Component of the WICH-5 ISWI chromatin-remodeling complex (also called the WICH complex) at least composed of SMARCA5/SNF2H and BAZ1B/WSTF, which regulates the spacing of histone octamers on the DNA template to facilitate access to DNA. Within the complex interacts with BAZ1B/WSTF. Component of the NoRC-5 ISWI chromatin-remodeling complex (also called the NoRC chromatin-remodeling complex) at least composed of SMARCA5/SNF2H and BAZ2A/TIP5; the complex suppresses rDNA transcription by a combination of nucleosome remodeling, histone deacetylation, and DNA methylation. Within the complex interacts with BAZ2A/TIP5. Within the complex interacts with HDAC1. Component of the BRF-5 ISWI chromatin-remodeling complex at least composed of SMARCA5/SNF2H and BAZ2B. Within the complex interacts with BAZ2B. Component of the NURF-5 ISWI chromatin-remodeling complex at least composed of SMARCA5/SNF2H and BPTF. Within the complex interacts with BPFT. Component of the CERF-5 ISWI chromatin-remodeling complex at least composed of SMARCA5/SNF2H and CECR2. LUZP1 is detected as part of the CERF-5 complex in embryonic stem cells where it is involved in complex stabilization but is not detected in the complex in the testis. Component of the RSF-5 ISWI chromatin-remodeling complex (also called the RSF complex) at least composed of SMARCA5/SNF2H and RSF1. Within the complex interacts with RSF1. Interacts with the cohesin complex component RAD21; the interaction is direct. Interacts with the NuRD complex components HDAC2, RBBP4 and CHD4; the interactions are direct. Interacts with PCNA. Component of the B-WICH complex, at least composed of SMARCA5/SNF2H, BAZ1B/WSTF, SF3B1, DEK, MYO1C, ERCC6, MYBBP1A and DDX21 which positively regulates RNA polymerase III transcription. Interacts with MYO1C. Interacts with BEND3. Interacts with SIRT6; promoting recruitment to DNA damage sites. As to expression, ubiquitously expressed.

The protein resides in the nucleus. Its subcellular location is the chromosome. It carries out the reaction ATP + H2O = ADP + phosphate + H(+). Functionally, ATPase that possesses intrinsic ATP-dependent nucleosome-remodeling activity. Catalytic subunit of ISWI chromatin-remodeling complexes, which form ordered nucleosome arrays on chromatin and facilitate access to DNA during DNA-templated processes such as DNA replication, transcription, and repair; this may require intact histone H4 tails. Within the ISWI chromatin-remodeling complexes, slides edge- and center-positioned histone octamers away from their original location on the DNA template. Catalytic activity and histone octamer sliding propensity is regulated and determined by components of the ISWI chromatin-remodeling complexes. The BAZ1A/ACF1-, BAZ1B/WSTF-, BAZ2A/TIP5- and BAZ2B-containing ISWI chromatin-remodeling complexes regulate the spacing of nucleosomes along the chromatin and have the ability to slide mononucleosomes to the center of a DNA template in an ATP-dependent manner. The CECR2- and RSF1-containing ISWI chromatin-remodeling complexes do not have the ability to slide mononucleosomes to the center of a DNA template. Binds to core histones together with RSF1, and is required for the assembly of regular nucleosome arrays by the RSF-5 ISWI chromatin-remodeling complex. Involved in DNA replication and together with BAZ1A/ACF1 is required for replication of pericentric heterochromatin in S-phase. Probably plays a role in repression of RNA polymerase I dependent transcription of the rDNA locus, through the recruitment of the SIN3/HDAC1 corepressor complex to the rDNA promoter. The WICH-5 ISWI chromatin-remodeling complex regulates the transcription of various genes, has a role in RNA polymerase I and RNA polymerase III transcription, mediates the histone H2AX phosphorylation at 'Tyr-142', and is involved in the maintenance of chromatin structures during DNA replication processes. Essential component of the NoRC-5 ISWI chromatin-remodeling complex, a complex that mediates silencing of a fraction of rDNA by recruiting histone-modifying enzymes and DNA methyltransferases, leading to heterochromatin formation and transcriptional silencing. Required for embryonic development and differentiation, and the proliferation of early blastocyst-derived stem cells. The sequence is that of SWI/SNF-related matrix-associated actin-dependent regulator of chromatin subfamily A member 5 (Smarca5) from Mus musculus (Mouse).